The sequence spans 890 residues: Nitrate reductase [NADH] 2 (890 aa).

Cys-165 is a Mo-molybdopterin binding site. In terms of domain architecture, Cytochrome b5 heme-binding spans 513–588 (SKMFSVSEVK…LEDYRIGELI (76 aa)). Heme-binding residues include His-548 and His-571. Residues 634 to 746 (RQKIPCKLVS…KGPLGHIEYT (113 aa)) form the FAD-binding FR-type domain. FAD contacts are provided by residues 686 to 689 (RAYT), 703 to 707 (LIKVY), Phe-708, Phe-715, 720 to 722 (LMS), and Thr-773.

This sequence belongs to the nitrate reductase family. Homodimer. The cofactor is FAD. It depends on heme as a cofactor. Mo-molybdopterin is required as a cofactor.

It catalyses the reaction nitrite + NAD(+) + H2O = nitrate + NADH + H(+). Its function is as follows. Nitrate reductase is a key enzyme involved in the first step of nitrate assimilation in plants, fungi and bacteria. The polypeptide is Nitrate reductase [NADH] 2 (NIA2) (Phaseolus vulgaris (Kidney bean)).